Here is a 512-residue protein sequence, read N- to C-terminus: MLFQDLSFPAAIGAVFGAVAISVAARCIYDLFFHPLRNFPGPKRAAIWSFYEFYYDVIRDGTYLWEIEKMHQKYGPIVRINSRSLHIHDPEYFNTIYAGSGRKVNKELSAVSGYTFPHSTISTLDHDLHRKRRAIVSPYFSKRAIAEIEPVIHERLNVLISRLAEAKGSIVDLTSAFSAYTADVVTYHFYGTHANYIGSKDFKYGLKDALTVLLNLYNLTRFLPVPANTLKNLPLPILGLINPNFPLVVSAREANKKMVLGYLNKPDEDKKAMKDARSKSVIVSALTDPNVPDAEKTLDRLLDEGETIIFAGIDTTARTLGVALFHLLNNKDVLMKLRKELQAVAKPDGQQWTTTELEAVPYMRGVVQEAIRLAYGLVVRIPRISPHEALRYNGFVIPPGTPVSQSTYLVNNDPSVFPNPQVFDPERWVKAAQDGVSLDKYMVSFSKGSRGCLGINLAYAKLYLGIARVATSLDMELFETTAKAISVYHTRGFAFPKEGDGAVKARVMGLCK.

The helical transmembrane segment at 5-25 (DLSFPAAIGAVFGAVAISVAA) threads the bilayer. Residue C452 participates in heme binding.

Belongs to the cytochrome P450 family. Requires heme as cofactor.

It localises to the membrane. It functions in the pathway secondary metabolite biosynthesis; terpenoid biosynthesis. Cytochrome P450 monooxygenase; part of the gene cluster that mediates the biosynthesis of the sesquiterpenoid aspterric acid (AA), an inhibitor of dihydroxy-acid dehydratase (DHAD) effective as an herbicide. AstB catalyzes the second step within the pathway and converts (-)-daucane produced by the terpene cyclase astA into an alpha-epoxy carboxylate intermediate which is further converted into the tricyclic aspterric acid by the cytochrome P450 monooxygenase astC. The sequence is that of Cytochrome P450 monooxygenase astB from Aspergillus terreus (strain NIH 2624 / FGSC A1156).